The primary structure comprises 343 residues: Aspartate carbamoyltransferase catalytic subunit (343 aa).

Residues Arg-91 and Thr-92 each contribute to the carbamoyl phosphate site. Lys-119 is a binding site for L-aspartate. Residues Arg-141, His-171, and Gln-174 each coordinate carbamoyl phosphate. Arg-204 and Arg-259 together coordinate L-aspartate. Carbamoyl phosphate contacts are provided by Gly-300 and Pro-301.

It belongs to the aspartate/ornithine carbamoyltransferase superfamily. ATCase family. As to quaternary structure, heterododecamer (2C3:3R2) of six catalytic PyrB chains organized as two trimers (C3), and six regulatory PyrI chains organized as three dimers (R2).

It catalyses the reaction carbamoyl phosphate + L-aspartate = N-carbamoyl-L-aspartate + phosphate + H(+). Its pathway is pyrimidine metabolism; UMP biosynthesis via de novo pathway; (S)-dihydroorotate from bicarbonate: step 2/3. Catalyzes the condensation of carbamoyl phosphate and aspartate to form carbamoyl aspartate and inorganic phosphate, the committed step in the de novo pyrimidine nucleotide biosynthesis pathway. The sequence is that of Aspartate carbamoyltransferase catalytic subunit from Burkholderia cenocepacia (strain HI2424).